Reading from the N-terminus, the 159-residue chain is Large ribosomal subunit protein uL30 (159 aa).

Belongs to the universal ribosomal protein uL30 family. As to quaternary structure, part of the 50S ribosomal subunit.

The chain is Large ribosomal subunit protein uL30 from Aeropyrum pernix (strain ATCC 700893 / DSM 11879 / JCM 9820 / NBRC 100138 / K1).